The sequence spans 448 residues: Probable intron-encoded endonuclease bI1 (448 aa).

A cob exon 1 encoded region spans residues 1–132; it reads MRLLKSHPLL…LMMATAFLGY (132 aa). The next 3 helical transmembrane spans lie at 32–52, 86–106, and 112–132; these read FGSL…TLAM, ASAF…YGSY, and LVWA…FLGY. Residues 133–448 form a cob intron 1 encoded region; the sequence is QHSPKWFDIS…QWIVEDFSDK (316 aa). Positions 230-321 constitute a GIY-YIG domain; that stretch reads DLSGVYMIIN…LKLLVPNYNI (92 aa).

This sequence to endonucleases of group I introns of fungi and phage. In terms of processing, the mature protein may arise from proteolytic cleavage of an in-frame translation of cob exon 1 plus intron 1, containing the bI1 open reading frame.

The protein localises to the mitochondrion inner membrane. Mitochondrial DNA endonuclease involved in intron homing. The protein is Probable intron-encoded endonuclease bI1 (bI1) of Neurospora crassa (strain ATCC 24698 / 74-OR23-1A / CBS 708.71 / DSM 1257 / FGSC 987).